We begin with the raw amino-acid sequence, 658 residues long: Putative phospholipase B-like lamina ancestor (658 aa).

A signal peptide spans 1-29 (MLKVVGASWQKTRIGTYILIGAGLLVIGA). N229, N465, and N486 each carry an N-linked (GlcNAc...) asparagine glycan.

Belongs to the phospholipase B-like family. Expressed in neural and glial progenitors prior to, but not after, differentiation. Not expressed in late third instar disks, but is expressed uniformly by early third instar disks, in the imaginal ring of the proventriculus and in the salivary gland.

Its subcellular location is the secreted. Functionally, putative phospholipase. Involved in the regulation of cellular plasticity in imaginal disks. The protein is Putative phospholipase B-like lamina ancestor (lama) of Drosophila melanogaster (Fruit fly).